Consider the following 285-residue polypeptide: tRNA uridine(34) hydroxylase (285 aa).

The region spanning 130-225 (RGDDVVFFDG…YGEAFGDTGL (96 aa)) is the Rhodanese domain. The active-site Cysteine persulfide intermediate is the Cys-185.

It belongs to the TrhO family.

It carries out the reaction uridine(34) in tRNA + AH2 + O2 = 5-hydroxyuridine(34) in tRNA + A + H2O. Catalyzes oxygen-dependent 5-hydroxyuridine (ho5U) modification at position 34 in tRNAs. In Rhodococcus jostii (strain RHA1), this protein is tRNA uridine(34) hydroxylase.